The following is a 193-amino-acid chain: RNA pyrophosphohydrolase (193 aa).

Residues 6 to 149 (GFRPNVGIIL…KRDVYQRALQ (144 aa)) form the Nudix hydrolase domain. The Nudix box signature appears at 38 to 59 (GGIKFGETPEQAMFRELEEEVG). The disordered stretch occupies residues 174–193 (THSARKTDEPSTEQTKPNNE).

Belongs to the Nudix hydrolase family. RppH subfamily. Requires a divalent metal cation as cofactor.

Its function is as follows. Accelerates the degradation of transcripts by removing pyrophosphate from the 5'-end of triphosphorylated RNA, leading to a more labile monophosphorylated state that can stimulate subsequent ribonuclease cleavage. This chain is RNA pyrophosphohydrolase, found in Herminiimonas arsenicoxydans.